The sequence spans 159 residues: Ribosomal RNA large subunit methyltransferase H (159 aa).

Residues L76 and G108 each contribute to the S-adenosyl-L-methionine site.

It belongs to the RNA methyltransferase RlmH family. As to quaternary structure, homodimer.

It is found in the cytoplasm. The enzyme catalyses pseudouridine(1915) in 23S rRNA + S-adenosyl-L-methionine = N(3)-methylpseudouridine(1915) in 23S rRNA + S-adenosyl-L-homocysteine + H(+). Its function is as follows. Specifically methylates the pseudouridine at position 1915 (m3Psi1915) in 23S rRNA. The protein is Ribosomal RNA large subunit methyltransferase H of Lactiplantibacillus plantarum (strain ATCC BAA-793 / NCIMB 8826 / WCFS1) (Lactobacillus plantarum).